An 899-amino-acid chain; its full sequence is Putative lipoxygenase 5 (899 aa).

Disordered regions lie at residues 15 to 34, 48 to 68, and 258 to 291; these read AGSRGMGKGASRRRTARSTA, APVEQQRGAGRPEAHPQSVAA, and VASARPVLGGEQMPYPRRMRTGRPSTATDASAES. The 137-residue stretch at 68–204 folds into the PLAT domain; the sequence is ARAVVTVRRR…VSRDRRVFFS (137 aa). The Lipoxygenase domain maps to 207–899; the sequence is PYLPSETPPG…CRGVPNSVTI (693 aa). Residues His-559, His-564, His-751, Asn-755, and Ile-899 each contribute to the Fe cation site.

It belongs to the lipoxygenase family. Fe cation is required as a cofactor.

The catalysed reaction is (9Z,12Z)-octadecadienoate + O2 = (13S)-hydroperoxy-(9Z,11E)-octadecadienoate. It catalyses the reaction (9Z,12Z,15Z)-octadecatrienoate + O2 = (13S)-hydroperoxy-(9Z,11E,15Z)-octadecatrienoate. Its pathway is lipid metabolism; oxylipin biosynthesis. Functionally, plant lipoxygenase may be involved in a number of diverse aspects of plant physiology including growth and development, pest resistance, and senescence or responses to wounding. Catalyzes the hydroperoxidation of lipids containing a cis,cis-1,4-pentadiene structure. This chain is Putative lipoxygenase 5, found in Oryza sativa subsp. japonica (Rice).